Here is a 234-residue protein sequence, read N- to C-terminus: Synaptogyrin-1 (234 aa).

Position 1 is an N-acetylmethionine (methionine 1). The Cytoplasmic portion of the chain corresponds to 1 to 23 (MEGGAYGAGKAGGAFDPYTLVRQ). The MARVEL domain occupies 20–173 (LVRQPHTILR…QAVLAFQRYQ (154 aa)). The chain crosses the membrane as a helical span at residues 24–44 (PHTILRVVSWVFSIVVFGSIV). Over 45-71 (NEGYLNNPEEEEEFCIYNRNPNACSYG) the chain is Lumenal. Residues 72–92 (VTVGVLAFLTCLLYLALDVYF) traverse the membrane as a helical segment. The Cytoplasmic portion of the chain corresponds to 93-103 (PQISSVKDRKK). The chain crosses the membrane as a helical span at residues 104 to 124 (AVLSDIGVSAFWAFFWFVGFC). The Lumenal segment spans residues 125-148 (FLANQWQVSKPKDNPLNEGTDAAR). Residues 149 to 169 (AAIAFSFFSIFTWAGQAVLAF) traverse the membrane as a helical segment. The Cytoplasmic portion of the chain corresponds to 170–234 (QRYQIGADSA…EPQGYQSQGY (65 aa)). The interval 201–234 (EPSAGSDPAGMGGTYQHPANAFDAEPQGYQSQGY) is disordered.

The protein belongs to the synaptogyrin family.

It localises to the cytoplasmic vesicle. The protein resides in the secretory vesicle. Its subcellular location is the synaptic vesicle membrane. The protein localises to the melanosome. In terms of biological role, may play a role in regulated exocytosis. Modulates the localization of synaptophysin/SYP into synaptic-like microvesicles and may therefore play a role in synaptic-like microvesicle formation and/or maturation. Involved in the regulation of short-term and long-term synaptic plasticity. The chain is Synaptogyrin-1 from Mus musculus (Mouse).